The chain runs to 154 residues: Holo-[acyl-carrier-protein] synthase (154 aa).

2 residues coordinate Mg(2+): D8 and E57.

It belongs to the P-Pant transferase superfamily. AcpS family. Requires Mg(2+) as cofactor.

The protein localises to the cytoplasm. The enzyme catalyses apo-[ACP] + CoA = holo-[ACP] + adenosine 3',5'-bisphosphate + H(+). In terms of biological role, transfers the 4'-phosphopantetheine moiety from coenzyme A to a Ser of acyl-carrier-protein. In Nitrosococcus oceani (strain ATCC 19707 / BCRC 17464 / JCM 30415 / NCIMB 11848 / C-107), this protein is Holo-[acyl-carrier-protein] synthase.